The following is a 397-amino-acid chain: L-rhamnonate dehydratase (397 aa).

The substrate site is built by H25 and R51. 3 residues coordinate Mg(2+): D217, E243, and E271. H321 acts as the Proton acceptor in catalysis. E341 serves as a coordination point for substrate.

This sequence belongs to the mandelate racemase/muconate lactonizing enzyme family. RhamD subfamily. In terms of assembly, homooctamer; tetramer of dimers. Requires Mg(2+) as cofactor.

It carries out the reaction L-rhamnonate = 2-dehydro-3-deoxy-L-rhamnonate + H2O. The protein operates within carbohydrate degradation; L-rhamnose degradation. Its function is as follows. Catalyzes the dehydration of L-rhamnonate to 2-keto-3-deoxy-L-rhamnonate (KDR). Also shows activity with L-lyxonate and L-mannonate, with much lower catalytic efficiency. Catalyzes the third step in an alternative pathway for rhamnose utilization that does not involve phosphorylated intermediates. The polypeptide is L-rhamnonate dehydratase (Sphingomonas sp. (strain SKA58)).